A 138-amino-acid chain; its full sequence is Phosphoribosyl-AMP cyclohydrolase (138 aa).

Residue aspartate 84 coordinates Mg(2+). Cysteine 85 is a binding site for Zn(2+). Aspartate 86 and aspartate 88 together coordinate Mg(2+). 2 residues coordinate Zn(2+): cysteine 102 and cysteine 109.

Belongs to the PRA-CH family. As to quaternary structure, homodimer. Mg(2+) serves as cofactor. Requires Zn(2+) as cofactor.

It is found in the cytoplasm. The catalysed reaction is 1-(5-phospho-beta-D-ribosyl)-5'-AMP + H2O = 1-(5-phospho-beta-D-ribosyl)-5-[(5-phospho-beta-D-ribosylamino)methylideneamino]imidazole-4-carboxamide. The protein operates within amino-acid biosynthesis; L-histidine biosynthesis; L-histidine from 5-phospho-alpha-D-ribose 1-diphosphate: step 3/9. Functionally, catalyzes the hydrolysis of the adenine ring of phosphoribosyl-AMP. The polypeptide is Phosphoribosyl-AMP cyclohydrolase (Burkholderia orbicola (strain MC0-3)).